The following is an 85-amino-acid chain: Dynein light chain 1, cytoplasmic (85 aa).

It belongs to the dynein light chain family. In terms of assembly, homodimer. Cytoplasmic dynein consists of two catalytic heavy chains (HCs) and a number of non-catalytic subunits which present intermediate chains (ICs), light intermediate chains (LICs) and light chains (LCs). Component of the nuclear pore complex (NPC). NPC constitutes the exclusive means of nucleocytoplasmic transport. NPCs allow the passive diffusion of ions and small molecules and the active, nuclear transport receptor-mediated bidirectional transport of macromolecules such as proteins, RNAs, ribonucleoparticles (RNPs), and ribosomal subunits across the nuclear envelope. Due to its 8-fold rotational symmetry, all subunits are present with 8 copies or multiples thereof.

The protein localises to the cytoplasm. It localises to the cytoskeleton. Its subcellular location is the nucleus. It is found in the nuclear pore complex. Functionally, acts as one of several non-catalytic accessory components of the cytoplasmic dynein complex that are thought to be involved in linking dynein to cargos and to adapter proteins that regulate dynein function. Cytoplasmic dynein 1 acts as a motor for the intracellular retrograde motility of vesicles and organelles along microtubules. May play a role in changing or maintaining the spatial distribution of cytoskeletal structures. Also a component of the nuclear pore complex. The sequence is that of Dynein light chain 1, cytoplasmic (dlc2) from Schizosaccharomyces pombe (strain 972 / ATCC 24843) (Fission yeast).